The primary structure comprises 471 residues: Collagenase 3 (471 aa).

The N-terminal stretch at 1–19 (MQPGVLAACLLLSWTHCWS) is a signal peptide. The propeptide at 20–103 (LPLLNSNEDD…PRCGVPDVGE (84 aa)) is activation peptide. Residues 94-101 (PRCGVPDV) carry the Cysteine switch motif. Zn(2+) is bound at residue Cys96. N-linked (GlcNAc...) asparagine glycosylation occurs at Asn117. Asp128 contributes to the Ca(2+) binding site. N-linked (GlcNAc...) asparagine glycans are attached at residues Asn152 and Asn158. Residue Asp162 participates in Ca(2+) binding. His172 and Asp174 together coordinate Zn(2+). Residues 176-246 (YPFDGPSGLL…GALMFPIYTY (71 aa)) are interaction with TIMP2. Positions 179, 180, 182, and 184 each coordinate Ca(2+). Zn(2+) is bound at residue His187. Ca(2+) contacts are provided by Asn194, Gly196, and Asp198. Residue His200 coordinates Zn(2+). The Ca(2+) site is built by Asp202, Asp203, and Glu205. Zn(2+) is bound at residue His222. Glu223 is a catalytic residue. Zn(2+) contacts are provided by His226, His232, and Met240. The disordered stretch occupies residues 263 to 284 (QSLYGPGDEDPNPKHPKTPDKC). The tract at residues 268-471 (PGDEDPNPKH…VMPTNSLLWC (204 aa)) is interaction with collagen. Positions 273–284 (PNPKHPKTPDKC) are enriched in basic and acidic residues. Hemopexin repeat units lie at residues 281-330 (PDKC…WPEL), 331-377 (PNRI…GFPR), 379-427 (VKKI…FPGI), and 428-471 (GGKV…LLWC). Cys284 and Cys471 form a disulfide bridge. The Ca(2+) site is built by Asp291, Ile293, Asp335, and Ala337. The residue at position 366 (Tyr366) is a Phosphotyrosine; by PKDCC. Residues Ser383 and Ala385 each coordinate Ca(2+). Residue Asn409 is glycosylated (N-linked (GlcNAc...) asparagine). The Ca(2+) site is built by Asp432 and Val434.

This sequence belongs to the peptidase M10A family. Requires Ca(2+) as cofactor. It depends on Zn(2+) as a cofactor. In terms of processing, the proenzyme is activated by removal of the propeptide; this cleavage can be effected by other matrix metalloproteinases, such as MMP2, MMP3 and MMP14 and may involve several cleavage steps. Cleavage can also be autocatalytic, after partial maturation by another protease or after treatment with 4-aminophenylmercuric acetate (APMA) (in vitro). Post-translationally, N-glycosylated. Tyrosine phosphorylated by PKDCC/VLK.

Its subcellular location is the secreted. It localises to the extracellular space. The protein resides in the extracellular matrix. In terms of biological role, plays a role in the degradation of extracellular matrix proteins including fibrillar collagen, fibronectin, TNC and ACAN. Cleaves triple helical collagens, including type I, type II and type III collagen, but has the highest activity with soluble type II collagen. Can also degrade collagen type IV, type XIV and type X. May also function by activating or degrading key regulatory proteins, such as TGFB1 and CCN2. Plays a role in wound healing, tissue remodeling, cartilage degradation, bone development, bone mineralization and ossification. Required for normal embryonic bone development and ossification. Plays a role in the healing of bone fractures via endochondral ossification. Plays a role in wound healing, probably by a mechanism that involves proteolytic activation of TGFB1 and degradation of CCN2. Plays a role in keratinocyte migration during wound healing. May play a role in cell migration and in tumor cell invasion. The polypeptide is Collagenase 3 (MMP13) (Oryctolagus cuniculus (Rabbit)).